Here is a 235-residue protein sequence, read N- to C-terminus: NAD(P)H-hydrate epimerase (235 aa).

Positions 18–221 constitute a YjeF N-terminal domain; it reads AAQIDEQLFT…SLVDEHELLM (204 aa). 65–69 is a (6S)-NADPHX binding site; the sequence is NNGGD. K(+) contacts are provided by asparagine 66 and aspartate 127. (6S)-NADPHX is bound by residues 131-137 and aspartate 160; that span reads GFSFHPP. Serine 163 contributes to the K(+) binding site.

Belongs to the NnrE/AIBP family. The cofactor is K(+).

The catalysed reaction is (6R)-NADHX = (6S)-NADHX. It carries out the reaction (6R)-NADPHX = (6S)-NADPHX. Functionally, catalyzes the epimerization of the S- and R-forms of NAD(P)HX, a damaged form of NAD(P)H that is a result of enzymatic or heat-dependent hydration. This is a prerequisite for the S-specific NAD(P)H-hydrate dehydratase to allow the repair of both epimers of NAD(P)HX. This Caenorhabditis elegans protein is NAD(P)H-hydrate epimerase.